Here is a 512-residue protein sequence, read N- to C-terminus: Glycine betaine transporter OpuD (512 aa).

Helical transmembrane passes span 5-25 (ISSV…WGVI), 45-65 (FGWY…FLIF), 82-102 (FGLL…GLVF), 135-155 (FFHW…CIAY), 186-206 (IDCI…GLGA), 222-242 (AFIV…LSAW), 257-277 (MVLA…VLIM), 312-332 (WTIF…IFIA), 343-363 (FLIG…SIFG), 395-415 (LTMV…ITSA), 441-461 (WGII…LAAL), and 464-484 (TAIL…ASLY).

Belongs to the BCCT transporter (TC 2.A.15) family.

It localises to the cell membrane. With respect to regulation, activity is stimulated by high osmolarity. High-affinity uptake of glycine betaine. Does not mediate either carnitine or choline uptake. This chain is Glycine betaine transporter OpuD (opuD), found in Bacillus subtilis (strain 168).